Reading from the N-terminus, the 155-residue chain is 3-hydroxyacyl-[acyl-carrier-protein] dehydratase FabZ (155 aa).

H58 is an active-site residue.

Belongs to the thioester dehydratase family. FabZ subfamily.

The protein resides in the cytoplasm. It catalyses the reaction a (3R)-hydroxyacyl-[ACP] = a (2E)-enoyl-[ACP] + H2O. Its function is as follows. Involved in unsaturated fatty acids biosynthesis. Catalyzes the dehydration of short chain beta-hydroxyacyl-ACPs and long chain saturated and unsaturated beta-hydroxyacyl-ACPs. In Rhizobium leguminosarum bv. trifolii (strain WSM2304), this protein is 3-hydroxyacyl-[acyl-carrier-protein] dehydratase FabZ.